Here is a 262-residue protein sequence, read N- to C-terminus: Cutinase 2 (262 aa).

Tyr61 contacts poly(ethylene terephthalate). Ser131 acts as the Nucleophile in catalysis. Met132 and Trp156 together coordinate poly(ethylene terephthalate). Residues Asp177 and His209 each act as charge relay system in the active site. An intrachain disulfide couples Cys242 to Cys260.

It belongs to the AB hydrolase superfamily.

The protein resides in the secreted. It localises to the periplasm. The enzyme catalyses a butanoate ester + H2O = an aliphatic alcohol + butanoate + H(+). It carries out the reaction an acetyl ester + H2O = an aliphatic alcohol + acetate + H(+). The catalysed reaction is (ethylene terephthalate)(n) + H2O = (ethylene terephthalate)(n-1) + 4-[(2-hydroxyethoxy)carbonyl]benzoate + H(+). It catalyses the reaction cutin + H2O = cutin monomers.. Its function is as follows. Catalyzes the hydrolysis of cutin, a polyester that forms the structure of plant cuticle. Shows esterase activity towards p-nitrophenol-linked aliphatic esters (pNP-aliphatic esters). Capable of degrading the plastic poly(ethylene terephthalate) (PET), the most abundant polyester plastic in the world. Capable of degrading the bioplastic poly(lactic acid) (PLLA). This Thermobifida cellulosilytica protein is Cutinase 2.